A 710-amino-acid polypeptide reads, in one-letter code: Bifunctional sesterterpene synthase (710 aa).

Positions Met1–Glu327 are stellata-2,6,19-trien synthase. Residues Asp92 and Asp96 each coordinate Mg(2+). Residues Asp92, Asp96, Arg181–Asp184, and Ser229–Glu233 each bind substrate. The short motif at Asp92 to Asp96 is the DDXXD motif 1 element. Residues Tyr278–Lys286 carry the NSE motif motif. Substrate is bound at residue Arg318–Tyr319. The tract at residues Arg328–Asn709 is geranylgeranyl diphosphate synthase. A disordered region spans residues His365–Gly404. Over residues Val368–Thr380 the composition is skewed to polar residues. Residues Lys430, Arg433, and His462 each coordinate isopentenyl diphosphate. Mg(2+) is bound by residues Asp469 and Asp473. The short motif at Asp469–Asp473 is the DDXXD motif 2 element. Residue Arg478 coordinates dimethylallyl diphosphate. Arg479 contacts isopentenyl diphosphate. 6 residues coordinate dimethylallyl diphosphate: Lys556, Thr557, Gln592, Asn599, Lys609, and Lys619.

It in the C-terminal section; belongs to the FPP/GGPP synthase family. The protein in the N-terminal section; belongs to the terpene synthase family. In terms of assembly, hexamer.

It catalyses the reaction 4 isopentenyl diphosphate + dimethylallyl diphosphate = (2E,6E,10E,14E)-geranylfarnesyl diphosphate + 4 diphosphate. The enzyme catalyses (2E,6E,10E,14E)-geranylfarnesyl diphosphate = variecoladiene + diphosphate. It participates in secondary metabolite biosynthesis; terpenoid biosynthesis. Functionally, multifunctional sesterterpene synthase; part of the gene cluster that mediates the biosynthesis of the sesterterpene variecolin. The first step in the pathway is performed by the variecoladiene synthase vrcA that possesses both prenyl transferase and terpene cyclase activity, converting isopentenyl diphosphate and dimethylallyl diphosphate into geranylfarnesyl pyrophosphate (GFPP) and then converting GFPP into the tetracyclic variecoladiene. The cytochrome P450 monooxygenase vrcB then catalyzes multiple oxidations at C-5 and C-20 positions to yield variecolin. The polypeptide is Bifunctional sesterterpene synthase (Aspergillus aculeatus (strain ATCC 16872 / CBS 172.66 / WB 5094)).